A 773-amino-acid chain; its full sequence is Preaspterpenacid I synthase sttA (773 aa).

The tract at residues 4 to 359 (ISDVMKHCVP…RYHRTDLATT (356 aa)) is sesterterpenoid synthase. Asp-105 lines the Mg(2+) pocket. A substrate-binding site is contributed by Asp-105. The interval 211-214 (RVNE) is substrate. Asn-255 provides a ligand contact to substrate. Substrate regions lie at residues 259-263 (SFPKE) and 350-351 (RY). The geranylfarnesyl diphosphate synthase stretch occupies residues 360–769 (AEDRATLIGK…RMMLLGMGPK (410 aa)). Positions 423–447 (AFKKRNSRNGKQNGTEGSKSTFTNG) are disordered. The segment covering 431 to 447 (NGKQNGTEGSKSTFTNG) has biased composition (polar residues). Isopentenyl diphosphate-binding residues include Lys-493, Arg-496, and His-525. Asp-532 and Asp-536 together coordinate Mg(2+). Residue Arg-541 coordinates dimethylallyl diphosphate. Arg-542 serves as a coordination point for isopentenyl diphosphate. Dimethylallyl diphosphate contacts are provided by Lys-614, Thr-615, Gln-652, Asn-659, and Lys-669.

This sequence in the N-terminal section; belongs to the terpene synthase family. It in the C-terminal section; belongs to the FPP/GGPP synthase family.

The enzyme catalyses 4 isopentenyl diphosphate + dimethylallyl diphosphate = (2E,6E,10E,14E)-geranylfarnesyl diphosphate + 4 diphosphate. It catalyses the reaction (2E,6E,10E,14E)-geranylfarnesyl diphosphate + H2O = preaspterpenacid acid I + diphosphate. Its pathway is secondary metabolite biosynthesis; terpenoid biosynthesis. Its function is as follows. Sesterterpenoid synthase; part of the gene cluster that mediates the biosynthesis of aspterpenacids. Performs both prenyl transferase and terpene cyclase activity, converting isopentenyl diphosphate and dimethylallyl diphosphate into geranylfarnesyl diphosphate (GFPP) and then converting GFPP into preaspterpenacid I. C22-oxidative modification of preaspterpenacid I by the cytochrome P450 monooxygenase sttB then leads to preaspterpenacid II. It has still to be determined how preaspterpenacid II is further modified to produce aspterpenacids. The chain is Preaspterpenacid I synthase sttA from Aspergillus terreus (strain NIH 2624 / FGSC A1156).